A 728-amino-acid chain; its full sequence is Magnetosome formation protease MamE (728 aa).

Residues 1-21 (MAMFNGDVEDGGRGDASCGKD) are Cytoplasmic-facing. The chain crosses the membrane as a helical span at residues 22–42 (LKRYLMLMGVVALVVLFGAFI). Residues 43–728 (YRQSSGGLRL…RNGQEFWIVL (686 aa)) lie on the Lumenal side of the membrane. Active-site charge relay system residues include His188, Asp221, and Ser297. The MCR (magnetochrome) 1 signature appears at 375 to 398 (IFAGTRAPHTDGRQNMDCTTCHDL). The heme site is built by Cys392, Cys395, His396, Cys438, Cys441, and His442. The MCR 2 motif lies at 421–444 (IPMGAVSPHTDGRQNMNCANCHQM). 2 consecutive PDZ domains span residues 471-573 (AINI…LRDG) and 622-721 (PAVM…NRNG).

The protein in the N-terminal section; belongs to the peptidase S1C family. As to quaternary structure, might interact with MamB via PDZ1. Heme is required as a cofactor. Post-translationally, subject to autocatalytic cleavage; cleavage also requires MamO.

Its subcellular location is the magnetosome membrane. With respect to regulation, autoproteolysis is stimulated by exogenous substrates or peptides that bind to its PDZ domains; may be stimulated by an environmental cue in vivo. Protease activity is tightly regulated; increasing its activity decreases substrate levels and disturbs biomineralization. In terms of biological role, acts at 2 distinct steps of magnetosome formation; required for correct localization of proteins to the magnetosome while the protease activity is required for maturation of small magnetite crystals into larger, functional ones. The 2 functions are separable by mutation. Probably cleaves at least itself, MamO and MamP; cleavage requires the putative transport domain of MamO. Involved in localization of some proteins (at least MamA, MamC, MamF, MamI and MamJ) to the magnetosome. This chain is Magnetosome formation protease MamE (mamE), found in Paramagnetospirillum magneticum (strain ATCC 700264 / AMB-1) (Magnetospirillum magneticum).